A 207-amino-acid chain; its full sequence is Large ribosomal subunit protein uL4 (207 aa).

Positions 49–78 are disordered; the sequence is HAVKNRSAVSGGGRKPWRQKGTGRARQGSI.

It belongs to the universal ribosomal protein uL4 family. In terms of assembly, part of the 50S ribosomal subunit.

Functionally, one of the primary rRNA binding proteins, this protein initially binds near the 5'-end of the 23S rRNA. It is important during the early stages of 50S assembly. It makes multiple contacts with different domains of the 23S rRNA in the assembled 50S subunit and ribosome. Its function is as follows. Forms part of the polypeptide exit tunnel. In Streptococcus pneumoniae serotype 19F (strain G54), this protein is Large ribosomal subunit protein uL4.